The following is a 304-amino-acid chain: L-xylo-3-hexulose reductase (304 aa).

3 residues coordinate NADP(+): Ile19, Asp68, and Asn107. Residues Ser163 and Ser164 each act as proton donor in the active site. NADP(+)-binding residues include Tyr177, Lys181, and Ala209. Tyr177 (proton acceptor) is an active-site residue. The active-site Lowers pKa of active site Tyr is Lys181.

Belongs to the short-chain dehydrogenases/reductases (SDR) family.

It catalyses the reaction D-sorbitol + NADP(+) = L-xylo-3-hexulose + NADPH + H(+). Its pathway is carbohydrate degradation. L-xylulose reductase involved in the catabolism of D-galactose through an oxidoreductive pathway. Catalyzes the NADPH-dependent reduction of L-xylo-3-hexulose. Is also active with D-ribulose and L-xylulose, and to a lesser extent with D-xylulose, D-fructose and L- and D-sorbose. In the reverse reaction, shows activity with D-sorbitol and D-mannitol, low activity with xylitol, but no activity with galactitol, ribitol, and L- and D-arabitol. In Hypocrea jecorina (strain QM6a) (Trichoderma reesei), this protein is L-xylo-3-hexulose reductase.